The following is a 314-amino-acid chain: Secreted frizzled-related protein 1 (314 aa).

The signal sequence occupies residues 1 to 31 (MGVGRSEGGRRGAALGVLLALGVALLAVGSA). An FZ domain is found at 53-169 (TKPHQCVAIP…FPQDYVCIAM (117 aa)). Intrachain disulfides connect cysteine 58-cysteine 121, cysteine 68-cysteine 114, cysteine 105-cysteine 140, cysteine 129-cysteine 166, and cysteine 133-cysteine 157. The N-linked (GlcNAc...) asparagine glycan is linked to asparagine 173. Cystine bridges form between cysteine 186–cysteine 256, cysteine 189–cysteine 258, and cysteine 203–cysteine 306. In terms of domain architecture, NTR spans 186–306 (CPPCDNEMKS…FMKKVKAPDC (121 aa)).

Belongs to the secreted frizzled-related protein (sFRP) family.

It localises to the secreted. Its function is as follows. Soluble frizzled-related proteins (sFRPS) function as modulators of Wnt signaling through direct interaction with Wnts. They have a role in regulating cell growth and differentiation in specific cell types. In Gallus gallus (Chicken), this protein is Secreted frizzled-related protein 1 (SFRP1).